Consider the following 544-residue polypeptide: CTP synthase (544 aa).

The amidoligase domain stretch occupies residues 1 to 266 (MTRFVFITGG…DREVLRHFNL (266 aa)). Serine 13 is a CTP binding site. Serine 13 lines the UTP pocket. An ATP-binding site is contributed by 14 to 19 (SLGKGI). Tyrosine 54 lines the L-glutamine pocket. Position 71 (aspartate 71) interacts with ATP. Mg(2+) is bound by residues aspartate 71 and glutamate 140. Residues 147 to 149 (DIE), 187 to 192 (KTKPTQ), and lysine 223 each bind CTP. UTP-binding positions include 187–192 (KTKPTQ) and lysine 223. A Glutamine amidotransferase type-1 domain is found at 292–543 (KIAIVGKYIT…VAAAVRQARL (252 aa)). Position 354 (glycine 354) interacts with L-glutamine. Cysteine 381 acts as the Nucleophile; for glutamine hydrolysis in catalysis. L-glutamine-binding positions include 382 to 385 (FGMQ), glutamate 405, and arginine 471. Active-site residues include histidine 516 and glutamate 518.

It belongs to the CTP synthase family. Homotetramer.

It carries out the reaction UTP + L-glutamine + ATP + H2O = CTP + L-glutamate + ADP + phosphate + 2 H(+). The enzyme catalyses L-glutamine + H2O = L-glutamate + NH4(+). It catalyses the reaction UTP + NH4(+) + ATP = CTP + ADP + phosphate + 2 H(+). It functions in the pathway pyrimidine metabolism; CTP biosynthesis via de novo pathway; CTP from UDP: step 2/2. Its activity is regulated as follows. Allosterically activated by GTP, when glutamine is the substrate; GTP has no effect on the reaction when ammonia is the substrate. The allosteric effector GTP functions by stabilizing the protein conformation that binds the tetrahedral intermediate(s) formed during glutamine hydrolysis. Inhibited by the product CTP, via allosteric rather than competitive inhibition. Its function is as follows. Catalyzes the ATP-dependent amination of UTP to CTP with either L-glutamine or ammonia as the source of nitrogen. Regulates intracellular CTP levels through interactions with the four ribonucleotide triphosphates. The chain is CTP synthase from Granulibacter bethesdensis (strain ATCC BAA-1260 / CGDNIH1).